Reading from the N-terminus, the 503-residue chain is ATP-dependent RNA helicase dbp3 (503 aa).

Basic and acidic residues predominate over residues 1-25 (MAKRVQHEGGDYRPQKRSKNERNGE). The segment at 1 to 35 (MAKRVQHEGGDYRPQKRSKNERNGEGSKVSPSAEA) is disordered. The Q motif signature appears at 104-112 (SFSSPTPIQ). The Helicase ATP-binding domain maps to 116–292 (WPLLFAGRDV…ATFMTSAVTV (177 aa)). 129–136 (AETGSGKT) is an ATP binding site. Positions 239–242 (DEAD) match the DEAD box motif. The Helicase C-terminal domain occupies 307 to 472 (RIKQVVEVVK…DVPDALLKFG (166 aa)).

Belongs to the DEAD box helicase family. DDX5/DBP2 subfamily.

It is found in the nucleus. Its subcellular location is the nucleolus. It catalyses the reaction ATP + H2O = ADP + phosphate + H(+). In terms of biological role, ATP-dependent RNA helicase required for 60S ribosomal subunit synthesis. Involved in efficient pre-rRNA processing, predominantly at site A3, which is necessary for the normal formation of 25S and 5.8S rRNAs. The sequence is that of ATP-dependent RNA helicase dbp3 (dbp3) from Neosartorya fischeri (strain ATCC 1020 / DSM 3700 / CBS 544.65 / FGSC A1164 / JCM 1740 / NRRL 181 / WB 181) (Aspergillus fischerianus).